The sequence spans 585 residues: Probable glucomannan 4-beta-mannosyltransferase 7 (585 aa).

The chain crosses the membrane as a helical span at residues 87–107 (VIAPTLQVAVWVCMVMSVMLV). The active site involves Asp-188. 2 residues coordinate substrate: Asp-247 and Asp-249. Residue Asp-341 is part of the active site. The next 4 membrane-spanning stretches (helical) occupy residues 420-440 (VVAPMVACVLYNIIVPLSVMI), 443-463 (LFIPIWGVAYIPMALLIITTI), 534-554 (LPEIGFSVFLIFCASYNLIFH), and 563-583 (LYLQGLAFLLLGFNFTGNFAC).

It belongs to the glycosyltransferase 2 family. Plant cellulose synthase-like A subfamily.

The protein localises to the golgi apparatus membrane. The enzyme catalyses GDP-mannose + (glucomannan)n = GDP + (glucomannan)n+1.. Its function is as follows. Probable mannan synthase which consists of a 4-beta-mannosyltransferase activity on mannan using GDP-mannose. The beta-1,4-mannan product is the backbone for galactomannan synthesis by galactomannan galactosyltransferase. Galactomannan is a noncellulosic polysaccharides of plant cell wall. This Oryza sativa subsp. japonica (Rice) protein is Probable glucomannan 4-beta-mannosyltransferase 7.